The following is a 676-amino-acid chain: A-type ATP synthase subunit I (676 aa).

8 helical membrane-spanning segments follow: residues 341-361 (VFIA…IGYG), 390-410 (AGVM…PFIV), 449-469 (ILLF…FALG), 490-510 (IIGV…VGVF), 538-558 (LNVY…LFVM), 564-584 (MGAM…QIMS), 590-610 (AIGL…MKLI), and 617-637 (IPIV…ILGI).

The protein belongs to the V-ATPase 116 kDa subunit family. Has multiple subunits with at least A(3), B(3), C, D, E, F, H, I and proteolipid K(x).

The protein resides in the cell membrane. Functionally, component of the A-type ATP synthase that produces ATP from ADP in the presence of a proton gradient across the membrane. The protein is A-type ATP synthase subunit I of Archaeoglobus fulgidus (strain ATCC 49558 / DSM 4304 / JCM 9628 / NBRC 100126 / VC-16).